Consider the following 309-residue polypeptide: Porphobilinogen deaminase (309 aa).

The residue at position 241 (C241) is an S-(dipyrrolylmethanemethyl)cysteine.

It belongs to the HMBS family. Monomer. Dipyrromethane is required as a cofactor.

The enzyme catalyses 4 porphobilinogen + H2O = hydroxymethylbilane + 4 NH4(+). Its pathway is porphyrin-containing compound metabolism; protoporphyrin-IX biosynthesis; coproporphyrinogen-III from 5-aminolevulinate: step 2/4. Functionally, tetrapolymerization of the monopyrrole PBG into the hydroxymethylbilane pre-uroporphyrinogen in several discrete steps. In Bacillus anthracis (strain A0248), this protein is Porphobilinogen deaminase.